Consider the following 220-residue polypeptide: Ribonuclease HII (220 aa).

One can recognise an RNase H type-2 domain in the interval 32–220; sequence KHIAGIDEAG…FAPIKGRFDC (189 aa). A divalent metal cation contacts are provided by D38, E39, and D130.

The protein belongs to the RNase HII family. Requires Mn(2+) as cofactor. It depends on Mg(2+) as a cofactor.

It is found in the cytoplasm. It carries out the reaction Endonucleolytic cleavage to 5'-phosphomonoester.. In terms of biological role, endonuclease that specifically degrades the RNA of RNA-DNA hybrids. This is Ribonuclease HII from Brucella ovis (strain ATCC 25840 / 63/290 / NCTC 10512).